The primary structure comprises 169 residues: MNVDFIAGINNLGEKIYTCEPFKTSFQNPFIVALIITAVVLVVFFAICNPPVDKKRKTKTAIYVYICIVALLFLHYYVLNHQLNDIYNKSNMDVIVSSIHDKYKGGDEIIPPISPPSVSNELEEDQPKKIAAGSKPADSKPADSKPASSADSKPLVPLQEVIMPSQYNN.

2 helical membrane passes run 28-48 and 60-80; these read NPFI…FAIC and TAIY…YVLN. The N-linked (GlcNAc...) asparagine; by host glycan is linked to asparagine 88. Residues 107–169 form a disordered region; the sequence is DEIIPPISPP…EVIMPSQYNN (63 aa). Low complexity predominate over residues 144–154; the sequence is SKPASSADSKP.

The protein belongs to the asfivirus B169L family.

It localises to the host membrane. The protein resides in the virion. This Ornithodoros (relapsing fever ticks) protein is Transmembrane protein B169L.